Consider the following 418-residue polypeptide: Gamma-glutamyl phosphate reductase (418 aa).

Belongs to the gamma-glutamyl phosphate reductase family.

The protein resides in the cytoplasm. The catalysed reaction is L-glutamate 5-semialdehyde + phosphate + NADP(+) = L-glutamyl 5-phosphate + NADPH + H(+). The protein operates within amino-acid biosynthesis; L-proline biosynthesis; L-glutamate 5-semialdehyde from L-glutamate: step 2/2. Its function is as follows. Catalyzes the NADPH-dependent reduction of L-glutamate 5-phosphate into L-glutamate 5-semialdehyde and phosphate. The product spontaneously undergoes cyclization to form 1-pyrroline-5-carboxylate. The protein is Gamma-glutamyl phosphate reductase of Nitrosococcus oceani (strain ATCC 19707 / BCRC 17464 / JCM 30415 / NCIMB 11848 / C-107).